A 470-amino-acid polypeptide reads, in one-letter code: Putative multidrug resistance protein MdtD (470 aa).

Over 1–11 (MTELPDNTRWQ) the chain is Periplasmic. Residues 12 to 32 (LWIVAFGFFMQSLDTTIVNTA) traverse the membrane as a helical segment. At 33–48 (LPSMAKSLGESPLHMH) the chain is on the cytoplasmic side. A helical transmembrane segment spans residues 49–69 (MVVVSYVLTVAVMLPASGWLA). Over 70 to 76 (DKIGVRN) the chain is Periplasmic. A helical membrane pass occupies residues 77–97 (IFFAAIVLFTLGSLFCALSGT). At 98-101 (LNQL) the chain is on the cytoplasmic side. Residues 102 to 124 (VLARVLQGVGGAMMVPVGRLTVM) traverse the membrane as a helical segment. Topologically, residues 125-137 (KIVPRAQYMAAMT) are periplasmic. The helical transmembrane segment at 138-158 (FVTLPGQIGPLLGPALGGVLV) threads the bilayer. Residues 159-164 (EYASWH) lie on the Cytoplasmic side of the membrane. Residues 165 to 185 (WIFLINIPVGIVGAMATFMLM) form a helical membrane-spanning segment. The Periplasmic portion of the chain corresponds to 186–196 (PNYIIETRRFD). Residues 197–217 (LPGFLLLAIGMAVLTLALDGS) traverse the membrane as a helical segment. Residues 218 to 224 (KSMGISP) are Cytoplasmic-facing. A helical transmembrane segment spans residues 225-245 (WTLAGLAAGGAAAILLYLFHA). Residues 246–262 (KKNSGALFSLRLFRTPT) lie on the Periplasmic side of the membrane. The helical transmembrane segment at 263-283 (FSLGLLGSFAGRIGSGMLPFM) threads the bilayer. Topologically, residues 284–285 (TP) are cytoplasmic. Residues 286–306 (VFLQIGLGFSPFHAGLMMIPM) traverse the membrane as a helical segment. At 307–341 (VLGSMGMKRIVVQIVNRFGYRRVLVATTLGLALVS) the chain is on the periplasmic side. Residues 342 to 362 (LLFMSVALLGWYYLLPLVLLL) form a helical membrane-spanning segment. Over 363–395 (QGMVNSARFSSMNTLTLKDLPDTLASSGNSLLS) the chain is Cytoplasmic. Residues 396–416 (MIMQLSMSIGVTIAGMLLGMF) form a helical membrane-spanning segment. The Periplasmic segment spans residues 417–430 (GQQHIGIDSSATHH). The chain crosses the membrane as a helical span at residues 431 to 451 (VFMYTWLCMAVIIALPAIIFA). At 452–470 (RVPNDTQQNMVISRRKRSL) the chain is on the cytoplasmic side.

It belongs to the major facilitator superfamily. TCR/Tet family.

It is found in the cell inner membrane. The protein is Putative multidrug resistance protein MdtD of Salmonella typhimurium (strain LT2 / SGSC1412 / ATCC 700720).